Here is a 540-residue protein sequence, read N- to C-terminus: DM7 family protein GD24576 (540 aa).

Residues 416-443 are disordered; sequence ATDTRGRDEIRTSCDQSQEKDEGSAEAD. The span at 417 to 443 shows a compositional bias: basic and acidic residues; it reads TDTRGRDEIRTSCDQSQEKDEGSAEAD.

This sequence belongs to the DM7 family.

The polypeptide is DM7 family protein GD24576 (Drosophila simulans (Fruit fly)).